The sequence spans 351 residues: Heat-inducible transcription repressor HrcA (351 aa).

This sequence belongs to the HrcA family.

Its function is as follows. Negative regulator of class I heat shock genes (grpE-dnaK-dnaJ and groELS operons). Prevents heat-shock induction of these operons. The polypeptide is Heat-inducible transcription repressor HrcA (Clostridium tetani (strain Massachusetts / E88)).